The primary structure comprises 416 residues: Glutamyl-tRNA reductase (416 aa).

Substrate is bound by residues 49 to 52 (TCNR), Ser-105, 110 to 112 (EPQ), and Gln-116. Catalysis depends on Cys-50, which acts as the Nucleophile. 185–190 (GAGETI) is a binding site for NADP(+).

Belongs to the glutamyl-tRNA reductase family. Homodimer.

It carries out the reaction (S)-4-amino-5-oxopentanoate + tRNA(Glu) + NADP(+) = L-glutamyl-tRNA(Glu) + NADPH + H(+). It participates in porphyrin-containing compound metabolism; protoporphyrin-IX biosynthesis; 5-aminolevulinate from L-glutamyl-tRNA(Glu): step 1/2. Its function is as follows. Catalyzes the NADPH-dependent reduction of glutamyl-tRNA(Glu) to glutamate 1-semialdehyde (GSA). The protein is Glutamyl-tRNA reductase of Shewanella piezotolerans (strain WP3 / JCM 13877).